A 346-amino-acid chain; its full sequence is S-adenosylmethionine:tRNA ribosyltransferase-isomerase (346 aa).

Belongs to the QueA family. As to quaternary structure, monomer.

It is found in the cytoplasm. The catalysed reaction is 7-aminomethyl-7-carbaguanosine(34) in tRNA + S-adenosyl-L-methionine = epoxyqueuosine(34) in tRNA + adenine + L-methionine + 2 H(+). It participates in tRNA modification; tRNA-queuosine biosynthesis. Functionally, transfers and isomerizes the ribose moiety from AdoMet to the 7-aminomethyl group of 7-deazaguanine (preQ1-tRNA) to give epoxyqueuosine (oQ-tRNA). The protein is S-adenosylmethionine:tRNA ribosyltransferase-isomerase of Neisseria meningitidis serogroup C (strain 053442).